Reading from the N-terminus, the 241-residue chain is DNA repair protein RecO (241 aa).

Belongs to the RecO family.

Involved in DNA repair and RecF pathway recombination. The chain is DNA repair protein RecO from Azobacteroides pseudotrichonymphae genomovar. CFP2.